Reading from the N-terminus, the 952-residue chain is Protein translocase subunit SecA (952 aa).

Residues Gln104, 122–126 (GEGKT), and Asp512 each bind ATP.

It belongs to the SecA family. As to quaternary structure, monomer and homodimer. Part of the essential Sec protein translocation apparatus which comprises SecA, SecYEG and auxiliary proteins SecDF. Other proteins may also be involved.

Its subcellular location is the cell inner membrane. The protein resides in the cytoplasm. It carries out the reaction ATP + H2O + cellular proteinSide 1 = ADP + phosphate + cellular proteinSide 2.. Part of the Sec protein translocase complex. Interacts with the SecYEG preprotein conducting channel. Has a central role in coupling the hydrolysis of ATP to the transfer of proteins into and across the cell membrane, serving as an ATP-driven molecular motor driving the stepwise translocation of polypeptide chains across the membrane. This Gloeobacter violaceus (strain ATCC 29082 / PCC 7421) protein is Protein translocase subunit SecA.